Consider the following 201-residue polypeptide: Glycerol-3-phosphate acyltransferase (201 aa).

5 helical membrane passes run Leu4–Thr24, Leu55–Leu75, Met80–Phe100, Ile110–Val130, and Phe152–Tyr174.

This sequence belongs to the PlsY family. As to quaternary structure, probably interacts with PlsX.

It is found in the cell inner membrane. The catalysed reaction is an acyl phosphate + sn-glycerol 3-phosphate = a 1-acyl-sn-glycero-3-phosphate + phosphate. The protein operates within lipid metabolism; phospholipid metabolism. Catalyzes the transfer of an acyl group from acyl-phosphate (acyl-PO(4)) to glycerol-3-phosphate (G3P) to form lysophosphatidic acid (LPA). This enzyme utilizes acyl-phosphate as fatty acyl donor, but not acyl-CoA or acyl-ACP. The chain is Glycerol-3-phosphate acyltransferase from Paramagnetospirillum magneticum (strain ATCC 700264 / AMB-1) (Magnetospirillum magneticum).